Consider the following 76-residue polypeptide: Defensin-like protein 122 (76 aa).

A signal peptide spans 1 to 25 (MSKTTVIAIFMVVLVLGLVTKETQG). 4 disulfides stabilise this stretch: Cys29/Cys74, Cys39/Cys60, Cys44/Cys68, and Cys48/Cys70.

This sequence belongs to the DEFL family. In terms of tissue distribution, expressed in flower buds, but not in stems, roots or rosette leaves.

Its subcellular location is the secreted. This is Defensin-like protein 122 (LCR30) from Arabidopsis thaliana (Mouse-ear cress).